The primary structure comprises 66 residues: Large ribosomal subunit protein bL33c (66 aa).

It belongs to the bacterial ribosomal protein bL33 family.

The protein resides in the plastid. It is found in the chloroplast. This is Large ribosomal subunit protein bL33c from Populus alba (White poplar).